We begin with the raw amino-acid sequence, 268 residues long: Tryptophan synthase alpha chain (268 aa).

Catalysis depends on proton acceptor residues Glu49 and Asp60.

Belongs to the TrpA family. In terms of assembly, tetramer of two alpha and two beta chains.

The enzyme catalyses (1S,2R)-1-C-(indol-3-yl)glycerol 3-phosphate + L-serine = D-glyceraldehyde 3-phosphate + L-tryptophan + H2O. Its pathway is amino-acid biosynthesis; L-tryptophan biosynthesis; L-tryptophan from chorismate: step 5/5. Its function is as follows. The alpha subunit is responsible for the aldol cleavage of indoleglycerol phosphate to indole and glyceraldehyde 3-phosphate. In Xanthomonas euvesicatoria pv. vesicatoria (strain 85-10) (Xanthomonas campestris pv. vesicatoria), this protein is Tryptophan synthase alpha chain.